The sequence spans 419 residues: Synaptic vesicle membrane protein VAT-1 homolog-like (419 aa).

The span at 1–25 shows a compositional bias: basic and acidic residues; the sequence is MAKEGVEKAEETEQMIEKEAGKEPA. 2 disordered regions span residues 1 to 36 and 384 to 419; these read MAKE…SHRL and PTPL…PFIQ. Serine 392 carries the phosphoserine modification. Phosphothreonine is present on residues threonine 393 and threonine 395. Serine 396 is subject to Phosphoserine. The span at 397 to 407 shows a compositional bias: acidic residues; sequence EAGEEEEDHEG. Over residues 408–419 the composition is skewed to basic and acidic residues; sequence DSENKERMPFIQ.

Belongs to the zinc-containing alcohol dehydrogenase family. Quinone oxidoreductase subfamily. As to expression, detected in skin fibroblasts.

The sequence is that of Synaptic vesicle membrane protein VAT-1 homolog-like (VAT1L) from Homo sapiens (Human).